Here is a 253-residue protein sequence, read N- to C-terminus: MSQPAAKASATAAVNPGPDGKGKAGPPPGPAPGSGPAPAPAPAPAQPAPAAKAELPPGSYKLVVFEQENFQGRRVEFSGECLNLGDRGFERVRSIIVTSGPWVAFEQSNFRGEMFVLEKGEYPRWDTWSSSYRSDRLMSFRPIKMDAQEHKLCLFEGANFKGNTMEIQEDDVPSLWVYGFCDRVGSVRVSSGTWVGYQYPGYRGYQYLLEPGDFRHWNEWGAFQPQMQAVRRLRDRQWHREGCFPVLAAEPPK.

Residues 1–18 (MSQPAAKASATAAVNPGP) show a composition bias toward low complexity. Residues 1–53 (MSQPAAKASATAAVNPGPDGKGKAGPPPGPAPGSGPAPAPAPAPAQPAPAAKA) form a disordered region. Position 2 is an N-acetylserine (serine 2). An N-terminal arm region spans residues 2 to 59 (SQPAAKASATAAVNPGPDGKGKAGPPPGPAPGSGPAPAPAPAPAQPAPAAKAELPPGS). Positions 25 to 47 (GPPPGPAPGSGPAPAPAPAPAQP) are enriched in pro residues. 2 Beta/gamma crystallin 'Greek key' domains span residues 60-99 (YKLV…IVTS) and 100-144 (GPWV…RPIK). Residues 145–149 (MDAQE) form a connecting peptide region. 2 Beta/gamma crystallin 'Greek key' domains span residues 150–191 (HKLC…RVSS) and 192–234 (GTWV…RRLR). A C-terminal arm region spans residues 236 to 253 (RQWHREGCFPVLAAEPPK).

The protein belongs to the beta/gamma-crystallin family. Homo/heterodimer, or complexes of higher-order. The structure of beta-crystallin oligomers seems to be stabilized through interactions between the N-terminal arms. In terms of processing, specific cleavages in the N-terminal arm occur during lens maturation and give rise to truncated forms, leading to impaired oligomerization and protein insolubilization.

Crystallins are the dominant structural components of the vertebrate eye lens. This chain is Beta-crystallin B1 (CRYBB1), found in Bos taurus (Bovine).